The primary structure comprises 386 residues: Succinate--CoA ligase [ADP-forming] subunit beta (386 aa).

The region spanning 9–244 is the ATP-grasp domain; that stretch reads KEILRKYGVP…HDEEDPLETR (236 aa). ATP contacts are provided by residues K46, 53–55, E99, C102, and E107; that span reads GRG. The Mg(2+) site is built by N199 and D213. Substrate is bound by residues N264 and 321–323; that span reads GIM.

The protein belongs to the succinate/malate CoA ligase beta subunit family. As to quaternary structure, heterotetramer of two alpha and two beta subunits. Mg(2+) serves as cofactor.

It catalyses the reaction succinate + ATP + CoA = succinyl-CoA + ADP + phosphate. It carries out the reaction GTP + succinate + CoA = succinyl-CoA + GDP + phosphate. It participates in carbohydrate metabolism; tricarboxylic acid cycle; succinate from succinyl-CoA (ligase route): step 1/1. Functionally, succinyl-CoA synthetase functions in the citric acid cycle (TCA), coupling the hydrolysis of succinyl-CoA to the synthesis of either ATP or GTP and thus represents the only step of substrate-level phosphorylation in the TCA. The beta subunit provides nucleotide specificity of the enzyme and binds the substrate succinate, while the binding sites for coenzyme A and phosphate are found in the alpha subunit. The polypeptide is Succinate--CoA ligase [ADP-forming] subunit beta (Rickettsia akari (strain Hartford)).